The sequence spans 457 residues: MQKYWREARSLLALAIPVIIAQIAQTAMGFVDTIMAGSVSATDMAAVAVGTSIWLPTILFGHGLLLALTPVIAQLNGAGKRPSIPHQISQGFWLVAGLSVLIIAVLYNAGHIISMMDNIDPLLADKAIGYLHAIMWGAPGYLCFQVLRGLCEGLSKTTPGMVIGFIGLLINIPVNYIFIYGKFGAPALGGVGCGVATASVYWIMYLLMHSYVARAPSLKDVRRPCTFEAADWATLRRLIAIGMPIALALFFEVTLFAVVALLVSPLGIVAVAGHQVALNFSSLMFVLPMSLGVAATIRVGYRLGQGSTDSARVSARTAIAVGMAMATCTAIFTIVLRKPIALLYNDDVQVLTMATHLMLLAALYQISDSVQVIGSGVLRGYKDTRSIFFITFIAYWLLGLPTGYLLALTNQITPAMGPSGFWIGFIIGLTSAAIMMALRIRWLQRQPKSWILQRAAR.

The next 12 helical transmembrane spans lie at Leu11–Val31, Ile53–Ala73, Trp93–Ile113, Ala127–Leu147, Gly160–Tyr180, Leu188–Met208, Ile239–Val259, Ala277–Ile297, Arg316–Leu336, Leu357–Val377, Ile387–Ala407, and Pro418–Leu438.

The protein belongs to the multi antimicrobial extrusion (MATE) (TC 2.A.66.1) family. MdtK subfamily.

The protein localises to the cell inner membrane. Its function is as follows. Multidrug efflux pump that functions probably as a Na(+)/drug antiporter. The sequence is that of Multidrug resistance protein MdtK from Edwardsiella ictaluri (strain 93-146).